The chain runs to 338 residues: Protein SPATA31F3 (338 aa).

The chain crosses the membrane as a helical span at residues 7 to 29 (VLWDVGYPLYTYGSICIIALIIW). Ser-152 is subject to Phosphoserine. A compositionally biased stretch (basic and acidic residues) spans 290–306 (DRTKNIEKSPTVTKDHV). The tract at residues 290–338 (DRTKNIEKSPTVTKDHVWGATTQKTTEDPEAQPPSTEEEGLIFCDAPSA) is disordered.

It belongs to the SPATA31 family.

Its subcellular location is the membrane. The chain is Protein SPATA31F3 from Homo sapiens (Human).